Reading from the N-terminus, the 436-residue chain is Aminopeptidase C (436 aa).

Active-site residues include C68, H356, and N378.

It belongs to the peptidase C1 family. As to quaternary structure, homohexamer.

The catalysed reaction is Inactivates bleomycin B2 (a cytotoxic glycometallopeptide) by hydrolysis of a carboxyamide bond of beta-aminoalanine, but also shows general aminopeptidase activity. The specificity varies somewhat with source, but amino acid arylamides of Met, Leu and Ala are preferred.. In terms of biological role, hydrolyzes naphthylamide-substituted amino acids as well as di- and tripeptides in which the half-cystine residue is involved in a disulfide loop, notably in oxytocin and vasopressin. Also has a bleomycin hydrolase activity. The chain is Aminopeptidase C (pepC) from Lactococcus lactis subsp. lactis (strain IL1403) (Streptococcus lactis).